We begin with the raw amino-acid sequence, 218 residues long: MKKPSLKYCGIHSLEDLKVTARSKADYLGFIFAESKRSVDPADVKRWCGETDTPGKKLVGVFVNENMSRMAEIVKDAGLDVIQLHGDETAADIKRLKSMTDCEIWKALPHGNDTVQSMASFAPYIDGYVIDSSVKGMRGGTGVSFSWDSVPLYIDAAQREGKRLFIAGGVNPDTIADLLKRRPPGIDLASGIEERGRKSEKLISLLEERMFEHVFISE.

This sequence belongs to the TrpF family.

The enzyme catalyses N-(5-phospho-beta-D-ribosyl)anthranilate = 1-(2-carboxyphenylamino)-1-deoxy-D-ribulose 5-phosphate. Its pathway is amino-acid biosynthesis; L-tryptophan biosynthesis; L-tryptophan from chorismate: step 3/5. In Bacillus licheniformis (strain ATCC 14580 / DSM 13 / JCM 2505 / CCUG 7422 / NBRC 12200 / NCIMB 9375 / NCTC 10341 / NRRL NRS-1264 / Gibson 46), this protein is N-(5'-phosphoribosyl)anthranilate isomerase.